A 355-amino-acid polypeptide reads, in one-letter code: Erythronate-4-phosphate dehydrogenase (355 aa).

Substrate contacts are provided by Ser45 and Thr66. Asp146 provides a ligand contact to NAD(+). Residue Arg206 is part of the active site. Asp229 is an NAD(+) binding site. Glu234 is an active-site residue. Residue His251 is the Proton donor of the active site. Gly254 lines the NAD(+) pocket. Tyr255 is a binding site for substrate.

Belongs to the D-isomer specific 2-hydroxyacid dehydrogenase family. PdxB subfamily. In terms of assembly, homodimer.

It is found in the cytoplasm. The enzyme catalyses 4-phospho-D-erythronate + NAD(+) = (R)-3-hydroxy-2-oxo-4-phosphooxybutanoate + NADH + H(+). The protein operates within cofactor biosynthesis; pyridoxine 5'-phosphate biosynthesis; pyridoxine 5'-phosphate from D-erythrose 4-phosphate: step 2/5. Functionally, catalyzes the oxidation of erythronate-4-phosphate to 3-hydroxy-2-oxo-4-phosphonooxybutanoate. This Acinetobacter baylyi (strain ATCC 33305 / BD413 / ADP1) protein is Erythronate-4-phosphate dehydrogenase.